The sequence spans 572 residues: Glypican-5 (572 aa).

The N-terminal stretch at 1–24 (MDARTWRLGWRCLLLLALLGSTRS) is a signal peptide. Residues asparagine 120 and asparagine 237 are each glycosylated (N-linked (GlcNAc...) asparagine). Residue serine 486 is glycosylated (O-linked (Xyl...) (glycosaminoglycan) serine). An N-linked (GlcNAc...) asparagine glycan is attached at asparagine 493. 3 O-linked (Xyl...) (glycosaminoglycan) serine glycosylation sites follow: serine 495, serine 507, and serine 509. N-linked (GlcNAc...) asparagine glycosylation is present at asparagine 527.

The protein belongs to the glypican family.

It is found in the cell membrane. Its subcellular location is the secreted. The protein localises to the extracellular space. Its function is as follows. Cell surface proteoglycan that bears heparan sulfate. The sequence is that of Glypican-5 (Gpc5) from Mus musculus (Mouse).